A 213-amino-acid polypeptide reads, in one-letter code: Probable thiopurine S-methyltransferase (213 aa).

Residues Trp-10, Leu-45, Glu-66, and Arg-125 each contribute to the S-adenosyl-L-methionine site.

Belongs to the class I-like SAM-binding methyltransferase superfamily. TPMT family.

The protein resides in the cytoplasm. It catalyses the reaction S-adenosyl-L-methionine + a thiopurine = S-adenosyl-L-homocysteine + a thiopurine S-methylether.. The polypeptide is Probable thiopurine S-methyltransferase (Yarrowia lipolytica (strain CLIB 122 / E 150) (Yeast)).